The chain runs to 554 residues: Endochitinase (554 aa).

The first 19 residues, 1 to 19 (MRATLATLAVLALATAVQS), serve as a signal peptide directing secretion. The GH18 domain occupies 23–398 (ARIVCYFSNW…KILHKHMSSY (376 aa)). Cys27 and Cys52 form a disulfide bridge. 76-77 (LD) provides a ligand contact to chitin. A glycan (N-linked (GlcNAc...) asparagine) is linked at Asn85. 103–106 (GGWA) contributes to the chitin binding site. Glu146 functions as the Proton donor in the catalytic mechanism. Residues Tyr147 and 213 to 216 (MSYD) contribute to the chitin site. N-linked (GlcNAc...) asparagine glycosylation occurs at Asn303. Trp370 serves as a coordination point for chitin. The tract at residues 398–494 (YTVPPPHTEN…VPPTENEVDG (97 aa)) is disordered. Positions 431–457 (PTTTTAKPASTTKTTVKTTTTTTAKPP) are enriched in low complexity. Basic and acidic residues predominate over residues 467-477 (INVRPEPKPEP). One can recognise a Chitin-binding type-2 domain in the interval 495–553 (SEICNSDQDYIPDKKHCDKYWRCVNGEAMQFSCQHGTVFNVELNVCDWPSNATRRECQQ). A disulfide bridge connects residues Cys527 and Cys540. An N-linked (GlcNAc...) asparagine glycan is attached at Asn545.

This sequence belongs to the glycosyl hydrolase 18 family. Chitinase class II subfamily. In terms of tissue distribution, epidermis and gut.

Its subcellular location is the secreted. It catalyses the reaction Random endo-hydrolysis of N-acetyl-beta-D-glucosaminide (1-&gt;4)-beta-linkages in chitin and chitodextrins.. Its function is as follows. Digests chitin in the exoskeleton during the molting process. The polypeptide is Endochitinase (Manduca sexta (Tobacco hawkmoth)).